The sequence spans 901 residues: Protein translocase subunit SecA (901 aa).

Residues Gln-87, 105–109, and Asp-512 contribute to the ATP site; that span reads GEGKT. Residues Cys-885, Cys-887, Cys-896, and His-897 each contribute to the Zn(2+) site.

The protein belongs to the SecA family. As to quaternary structure, monomer and homodimer. Part of the essential Sec protein translocation apparatus which comprises SecA, SecYEG and auxiliary proteins SecDF-YajC and YidC. Requires Zn(2+) as cofactor.

Its subcellular location is the cell inner membrane. The protein resides in the cytoplasm. It carries out the reaction ATP + H2O + cellular proteinSide 1 = ADP + phosphate + cellular proteinSide 2.. Functionally, part of the Sec protein translocase complex. Interacts with the SecYEG preprotein conducting channel. Has a central role in coupling the hydrolysis of ATP to the transfer of proteins into and across the cell membrane, serving both as a receptor for the preprotein-SecB complex and as an ATP-driven molecular motor driving the stepwise translocation of polypeptide chains across the membrane. This is Protein translocase subunit SecA from Salmonella typhi.